Reading from the N-terminus, the 276-residue chain is Protein MoxJ (276 aa).

Residues 1-24 (MLIDFRQVCGAGAAALALASPALA) form the signal peptide.

It localises to the periplasm. May be involved in the assemblage of active methanol dehydrogenase and/or its cofactor PQQ in the periplasm. This chain is Protein MoxJ (moxJ), found in Paracoccus denitrificans.